The sequence spans 1159 residues: Anillin-like protein 1 (1159 aa).

Disordered stretches follow at residues 43–81, 266–327, 409–430, 549–608, and 629–699; these read VASP…MKEN, QQVS…TKTT, KLKK…APVP, AIPK…GDVI, and FGFM…KSSS. Over residues 50 to 60 the composition is skewed to polar residues; that stretch reads FGSSSKCNDGP. Over residues 287–327 the composition is skewed to low complexity; the sequence is ASSATSSSSSTTTLTTISGASGSTTSGISNAPQDSASTKTT. Positions 421–430 are enriched in pro residues; sequence PPAPTSAPVP. Positions 564–584 are enriched in polar residues; that stretch reads SASSLYSQGARSNTASPASKS. Residues 660-684 show a composition bias toward acidic residues; it reads VIEEETENEDESEPYEPEEEEDDDA. The region spanning 1029-1147 is the PH domain; the sequence is DITYHGFLSM…WLSLINSTSK (119 aa).

As to expression, strongly expressed in dividing neuroblasts under the ventral epidermal cells during ventral enclosure.

The protein localises to the cytoplasm. Its subcellular location is the cell cortex. The protein resides in the cytoskeleton. It is found in the spindle. It localises to the midbody. The protein localises to the cleavage furrow. Its function is as follows. Required for contractile events in embryos that occur prior to mitosis, such as cortical ruffling and pseudocleavage. Promotes membrane ruffling by organizing cortical patches of septins and myosin II. Not generally required for cytokinesis in mitotic cells. Required for the asymmetric cleavage events that extrude the two polar bodies during oocyte meiosis. Not required for meiotic contractile ring assembly, initiation or closure but is required for the transformation of the contractile ring from a disk above the spindle to a tube around the spindle midzone. Promotes astral microtubule-directed cortical myosin polarization and cleavage furrow ingression. Regulates neuroblast cytokinesis during mid- to late-embryogenesis and is required for ventral enclosure. This is Anillin-like protein 1 (ani-1) from Caenorhabditis elegans.